The chain runs to 220 residues: Ras-related protein Rab-3A (220 aa).

Residues Ser31, Ser32, Val33, Gly34, Lys35, Thr36, Ser37, Thr48, Pro49, Ser53, and Thr54 each contribute to the GTP site. Thr36 provides a ligand contact to Mg(2+). Residues 49 to 58 (PAFVSTVGID) carry the Switch 1 motif. The Mg(2+) site is built by Thr54 and Asp77. Position 80 (Gly80) interacts with GTP. A Switch 2 motif is present at residues 80-96 (GQERYRTITTAYYRGAM). Position 86 is a phosphothreonine; by LRRK2 (Thr86). GTP contacts are provided by Asn135, Lys136, Asp138, Ala166, and Lys167. Residues Ser188 and Ser190 each carry the phosphoserine modification. Residues 194–220 (ADPAVTGAKQGPQLSDQQVPPHQDCAC) are disordered. Residues Cys218 and Cys220 are each lipidated (S-geranylgeranyl cysteine). Cys220 is modified (cysteine methyl ester).

Belongs to the small GTPase superfamily. Rab family. As to quaternary structure, interacts with RIMS1 and RIMS2. Interacts with Rabphilin-3A/RPH3A and Rab effector Noc2/RPH3AL. Interacts with SYTL4. Interacts with RAB3IP. Interacts with SGSM1 and SGSM3. Interacts with SYT1. Interacts with MYH9; this interaction is essential for lysosome exocytosis and plasma membrane repair. Interacts with STXBP1; this interaction promotes RAB3A dissociation from the vesicle membrane. Interacts with SNCA. The GTP-bound form interacts with REP15. Interacts with GDI1, GDI2, CHM and CHML; phosphorylation at Thr-86 disrupts these interactions. Interacts with MADD (via uDENN domain); the GTP-bound form is preferred for interaction. Mg(2+) is required as a cofactor. Post-translationally, phosphorylation of Thr-86 in the switch II region by LRRK2 prevents the association of RAB regulatory proteins, including CHM, CHML and RAB GDP dissociation inhibitors GDI1 and GDI2. In terms of tissue distribution, specifically expressed in brain.

The protein resides in the cytoplasm. It localises to the cytosol. Its subcellular location is the lysosome. It is found in the cytoplasmic vesicle. The protein localises to the secretory vesicle. The protein resides in the cell projection. It localises to the axon. Its subcellular location is the cell membrane. It is found in the presynapse. The protein localises to the postsynapse. The enzyme catalyses GTP + H2O = GDP + phosphate + H(+). With respect to regulation, regulated by guanine nucleotide exchange factors (GEFs) including RAB3IL1 and MADD which promote the exchange of bound GDP for free GTP. Regulated by GTPase activating proteins (GAPs) including RAB3GAP1 and TBC1D10B which increase the GTP hydrolysis activity. Inhibited by GDP dissociation inhibitors (GDIs) which prevent Rab-GDP dissociation. The small GTPases Rab are key regulators of intracellular membrane trafficking, from the formation of transport vesicles to their fusion with membranes. Rabs cycle between an inactive GDP-bound form and an active GTP-bound form that is able to recruit to membranes different sets of downstream effectors directly responsible for vesicle formation, movement, tethering and fusion. RAB3A plays a central role in regulated exocytosis and secretion. Controls the recruitment, tethering and docking of secretory vesicles to the plasma membrane. Upon stimulation, switches to its active GTP-bound form, cycles to vesicles and recruits effectors such as RIMS1, RIMS2, Rabphilin-3A/RPH3A, RPH3AL or SYTL4 to help the docking of vesicules onto the plasma membrane. Upon GTP hydrolysis by GTPase-activating protein, dissociates from the vesicle membrane allowing the exocytosis to proceed. Stimulates insulin secretion through interaction with RIMS2 or RPH3AL effectors in pancreatic beta cells. Regulates calcium-dependent lysosome exocytosis and plasma membrane repair (PMR) via the interaction with 2 effectors, SYTL4 and myosin-9/MYH9. Acts as a positive regulator of acrosome content secretion in sperm cells by interacting with RIMS1. Also plays a role in the regulation of dopamine release by interacting with synaptotagmin I/SYT. This is Ras-related protein Rab-3A from Homo sapiens (Human).